The following is a 65-amino-acid chain: Small ribosomal subunit protein eS17 (65 aa).

This sequence belongs to the eukaryotic ribosomal protein eS17 family.

The chain is Small ribosomal subunit protein eS17 from Archaeoglobus fulgidus (strain ATCC 49558 / DSM 4304 / JCM 9628 / NBRC 100126 / VC-16).